We begin with the raw amino-acid sequence, 109 residues long: uncharacterized protein (109 aa).

A helical transmembrane segment spans residues 26–48 (VTSIMTVSDINYLLLYLIILLTL).

The protein localises to the membrane. This is an uncharacterized protein from Saccharomyces cerevisiae (strain ATCC 204508 / S288c) (Baker's yeast).